A 418-amino-acid chain; its full sequence is E3 ubiquitin-protein ligase pellino homolog 1 (418 aa).

Residues 13–200 form the FHA; atypical domain; that stretch reads APVKYGELIV…MHPRNGFTED (188 aa). Phosphoserine is present on S121. T127 bears the Phosphothreonine mark. A ring-like domain; necessary for ubiquitination of RIPK3 region spans residues 311 to 399; the sequence is CGHVHGYHNW…TFHAACPFCA (89 aa).

Belongs to the pellino family. Interacts with MAP3K7. Upon IL1B treatment, forms a complex with TRAF6, IRAK1, IRAK4 and MYD88; this complex recruits MAP3K7/TAK1, TAB1 and TAB2 to mediate NF-kappa-B activation. Direct binding of SMAD6 to PELI1 prevents the complex formation and hence negatively regulates IL1R-TLR signaling and eventually NF-kappa-B-mediated gene expression. Interacts (via atypical FHA domain) with RIPK3. Binds preferentially to the 'Thr-182' phosphorylated form of RIPK3. Interacts with RIPK1. Phosphorylation by IRAK1 and IRAK4 enhances its E3 ligase activity. Phosphorylated by ATM in response to DNA damage, promoting localization to DNA double-strand breaks (DSBs) and ability to mediate 'Lys-63'-linked ubiquitination of NBN. In terms of processing, sumoylated.

The protein localises to the chromosome. The catalysed reaction is S-ubiquitinyl-[E2 ubiquitin-conjugating enzyme]-L-cysteine + [acceptor protein]-L-lysine = [E2 ubiquitin-conjugating enzyme]-L-cysteine + N(6)-ubiquitinyl-[acceptor protein]-L-lysine.. Its pathway is protein modification; protein ubiquitination. E3 ubiquitin ligase catalyzing the covalent attachment of ubiquitin moieties onto substrate proteins. Involved in the TLR and IL-1 signaling pathways via interaction with the complex containing IRAK kinases and TRAF6. Acts as a positive regulator of inflammatory response in microglia through activation of NF-kappa-B and MAP kinase. Mediates 'Lys-63'-linked polyubiquitination of IRAK1 allowing subsequent NF-kappa-B activation. Conjugates 'Lys-63'-linked ubiquitin chains to the adapter protein ASC/PYCARD, which in turn is crucial for NLRP3 inflammasome activation. Mediates 'Lys-48'-linked polyubiquitination of RIPK3 leading to its subsequent proteasome-dependent degradation; preferentially recognizes and mediates the degradation of the 'Thr-182' phosphorylated form of RIPK3. Negatively regulates necroptosis by reducing RIPK3 expression. Mediates 'Lys-63'-linked ubiquitination of RIPK1. Following phosphorylation by ATM, catalyzes 'Lys-63'-linked ubiquitination of NBN, promoting DNA repair via homologous recombination. Negatively regulates activation of the metabolic mTORC1 signaling pathway by mediating 'Lys-63'-linked ubiquitination of mTORC1-inhibitory protein TSC1 and thereby promoting TSC1/TSC2 complex stability. The protein is E3 ubiquitin-protein ligase pellino homolog 1 (Peli1) of Mus musculus (Mouse).